The primary structure comprises 264 residues: E3 ubiquitin-protein ligase MARCHF8 (264 aa).

Positions 15-47 (LGHSVSRSSNISKAGSPTSVSAPSSFPRTSVTP) are disordered. Residues 17–47 (HSVSRSSNISKAGSPTSVSAPSSFPRTSVTP) are compositionally biased toward polar residues. Residues 45–106 (VTPSSQDICR…ELCKFEFIME (62 aa)) form an RING-CH-type zinc finger. Positions 53, 56, 70, 72, 80, 83, 96, and 99 each coordinate Zn(2+). 2 helical membrane-spanning segments follow: residues 130–150 (CSVTFHVIAITCVVWSLYVLI) and 170–190 (FWTKLVVVAIGFTGGLLFMYV).

It is found in the cytoplasmic vesicle membrane. The protein localises to the lysosome membrane. It localises to the early endosome membrane. The catalysed reaction is S-ubiquitinyl-[E2 ubiquitin-conjugating enzyme]-L-cysteine + [acceptor protein]-L-lysine = [E2 ubiquitin-conjugating enzyme]-L-cysteine + N(6)-ubiquitinyl-[acceptor protein]-L-lysine.. It functions in the pathway protein modification; protein ubiquitination. Its function is as follows. E3 ubiquitin-protein ligase that mediates ubiquitination of cd86 and MHC class II proteins, such as hla-dr alpha and beta, and promotes their subsequent endocytosis and sorting to lysosomes via multivesicular bodies. This chain is E3 ubiquitin-protein ligase MARCHF8 (marchf8), found in Xenopus tropicalis (Western clawed frog).